Consider the following 204-residue polypeptide: Proteasome subunit beta type-2-A (204 aa).

Methionine 1 carries the post-translational modification N-acetylmethionine.

This sequence belongs to the peptidase T1B family. As to quaternary structure, component of the 20S core complex of the 26S proteasome. The 26S proteasome is composed of a core protease (CP), known as the 20S proteasome, capped at one or both ends by the 19S regulatory particle (RP/PA700). The 20S proteasome core is composed of 28 subunits that are arranged in four stacked rings, resulting in a barrel-shaped structure. The two end rings are each formed by seven alpha subunits, and the two central rings are each formed by seven beta subunits. The catalytic chamber with the active sites is on the inside of the barrel.

The protein localises to the cytoplasm. Its subcellular location is the nucleus. In terms of biological role, non-catalytic component of the proteasome, a multicatalytic proteinase complex which is characterized by its ability to cleave peptides with Arg, Phe, Tyr, Leu, and Glu adjacent to the leaving group at neutral or slightly basic pH. The proteasome has an ATP-dependent proteolytic activity. The sequence is that of Proteasome subunit beta type-2-A (PBD1) from Arabidopsis thaliana (Mouse-ear cress).